Reading from the N-terminus, the 311-residue chain is Cytosolic Fe-S cluster assembly factor Nubp1 homolog (311 aa).

Cys9, Cys23, Cys26, and Cys32 together coordinate [4Fe-4S] cluster. ATP is bound at residue 63 to 70 (GKGGVGKS). Residues Cys241 and Cys244 each contribute to the [4Fe-4S] cluster site.

This sequence belongs to the Mrp/NBP35 ATP-binding proteins family. NUBP1/NBP35 subfamily. Heterotetramer of 2 Nubp1 and 2 Nubp2 chains. [4Fe-4S] cluster is required as a cofactor.

Its subcellular location is the cytoplasm. Component of the cytosolic iron-sulfur (Fe/S) protein assembly (CIA) machinery. Required for maturation of extramitochondrial Fe-S proteins. The Nubp1-Nubp2 heterotetramer forms a Fe-S scaffold complex, mediating the de novo assembly of an Fe-S cluster and its transfer to target apoproteins. This is Cytosolic Fe-S cluster assembly factor Nubp1 homolog from Drosophila grimshawi (Hawaiian fruit fly).